We begin with the raw amino-acid sequence, 57 residues long: U-Asilidin(1)-Mar2a (57 aa).

The N-terminal stretch at 1–24 is a signal peptide; the sequence is MAPLLKLNILLLIVLICFTFHANA. 3 cysteine pairs are disulfide-bonded: C28/C44, C35/C48, and C43/C53.

This sequence belongs to the asilidin-1 family. As to expression, expressed by the venom gland. Exclusively expressed in the venom thoracic glands (and not in body tissues).

Its subcellular location is the secreted. May act as a neurotoxin. The sequence is that of U-Asilidin(1)-Mar2a from Machimus arthriticus (Breck robberfly).